Reading from the N-terminus, the 439-residue chain is Trigger factor (439 aa).

Residues Gly163–Pro248 form the PPIase FKBP-type domain.

It belongs to the FKBP-type PPIase family. Tig subfamily.

Its subcellular location is the cytoplasm. It carries out the reaction [protein]-peptidylproline (omega=180) = [protein]-peptidylproline (omega=0). Functionally, involved in protein export. Acts as a chaperone by maintaining the newly synthesized protein in an open conformation. Functions as a peptidyl-prolyl cis-trans isomerase. The chain is Trigger factor from Nitrosomonas europaea (strain ATCC 19718 / CIP 103999 / KCTC 2705 / NBRC 14298).